The primary structure comprises 934 residues: ATP-dependent RNA helicase dbp-10 (934 aa).

Positions 21–43 (LFNNDSDFEDNSSKHHTKKGAVT) are disordered. The short motif at 99–127 (GGFQAMGLNAHLLRAITRKGFSVPTPIQR) is the Q motif element. One can recognise a Helicase ATP-binding domain in the interval 130–302 (IPLILERKDV…RAGLQEPSLV (173 aa)). 143 to 150 (ARTGSGKT) contributes to the ATP binding site. The DEAD box motif lies at 250–253 (DEAD). Disordered regions lie at residues 343-370 (GPPEGTKEESDELQARKRKREYRPNPKE), 613-722 (ELGP…FQDP), and 851-934 (GAQP…RQKR). The 155-residue stretch at 359-513 (KRKREYRPNP…KNPSFAADVV (155 aa)) folds into the Helicase C-terminal domain. 2 stretches are compositionally biased toward acidic residues: residues 644–654 (DEDDEDVDMED) and 662–700 (EETNAFEDFEDEEEEGEAEEAEEAEAKEDPYADDSDSEM). A compositionally biased stretch (basic and acidic residues) spans 864 to 926 (EKAPKDADKF…VAEKKREKNA (63 aa)).

It belongs to the DEAD box helicase family. DDX54/DBP10 subfamily.

It is found in the nucleus. The protein localises to the nucleolus. The catalysed reaction is ATP + H2O = ADP + phosphate + H(+). Functionally, ATP-binding RNA helicase involved in the biogenesis of 60S ribosomal subunits and is required for the normal formation of 25S and 5.8S rRNAs. In Neurospora crassa (strain ATCC 24698 / 74-OR23-1A / CBS 708.71 / DSM 1257 / FGSC 987), this protein is ATP-dependent RNA helicase dbp-10 (dbp-10).